The sequence spans 139 residues: Large ribosomal subunit protein bL9m (139 aa).

Residues 83–121 form a disordered region; the sequence is DHQQLSKRHETEVQKNMELRKESVFGHKKEEKPKEEKKG.

The protein belongs to the bacterial ribosomal protein bL9 family. In terms of assembly, component of the mitochondrial large ribosomal subunit (mt-LSU). Mature yeast 74S mitochondrial ribosomes consist of a small (37S) and a large (54S) subunit. The 37S small subunit contains a 15S ribosomal RNA (15S mt-rRNA) and 34 different proteins. The 54S large subunit contains a 21S rRNA (21S mt-rRNA) and 46 different proteins.

The protein localises to the mitochondrion. Its function is as follows. Component of the mitochondrial ribosome (mitoribosome), a dedicated translation machinery responsible for the synthesis of mitochondrial genome-encoded proteins, including at least some of the essential transmembrane subunits of the mitochondrial respiratory chain. The mitoribosomes are attached to the mitochondrial inner membrane and translation products are cotranslationally integrated into the membrane. The sequence is that of Large ribosomal subunit protein bL9m (MRPL50) from Saccharomyces cerevisiae (strain ATCC 204508 / S288c) (Baker's yeast).